A 155-amino-acid polypeptide reads, in one-letter code: Pathogenesis-related protein 2 (155 aa).

This sequence belongs to the BetVI family.

The chain is Pathogenesis-related protein 2 from Phaseolus vulgaris (Kidney bean).